The following is a 521-amino-acid chain: uncharacterized protein (521 aa).

Positions 1 to 25 (MLQRSLGVNGRKLAMSARSAKRERK) are disordered. A run of 6 helical transmembrane segments spans residues 68 to 88 (GAVWVLPTFGVAIGLGSGAVL), 114 to 134 (VLIVVSATMITTIGIVFSLTV), 160 to 180 (VVLAIFACTFAYSTGGLHTVG), 192 to 212 (VAVTGSLALAFVSIAALIYFL), 290 to 310 (ALLVTFVGDYVTAGGLLGWCW), and 399 to 419 (LLFWLPYPSFATYLHVGCAQI).

The protein localises to the cell membrane. This is an uncharacterized protein from Mycobacterium bovis (strain ATCC BAA-935 / AF2122/97).